We begin with the raw amino-acid sequence, 319 residues long: ATP-dependent 6-phosphofructokinase 1 (319 aa).

Position 11 (glycine 11) interacts with ATP. Residue 21–25 (RAVTR) participates in ADP binding. Residues 72–73 (RC) and 102–105 (GDGS) contribute to the ATP site. Aspartate 103 provides a ligand contact to Mg(2+). Substrate is bound at residue 125–127 (TID). Aspartate 127 functions as the Proton acceptor in the catalytic mechanism. Arginine 154 contributes to the ADP binding site. Substrate-binding positions include arginine 162 and 169-171 (MGR). ADP contacts are provided by residues 185 to 187 (GAE) and 213 to 215 (KTH). Substrate contacts are provided by residues glutamate 222, arginine 243, and 249-252 (HIQR).

The protein belongs to the phosphofructokinase type A (PFKA) family. ATP-dependent PFK group I subfamily. Prokaryotic clade 'B1' sub-subfamily. Homotetramer. Mg(2+) is required as a cofactor.

The protein resides in the cytoplasm. The catalysed reaction is beta-D-fructose 6-phosphate + ATP = beta-D-fructose 1,6-bisphosphate + ADP + H(+). Its pathway is carbohydrate degradation; glycolysis; D-glyceraldehyde 3-phosphate and glycerone phosphate from D-glucose: step 3/4. With respect to regulation, allosterically activated by ADP and other diphosphonucleosides, and allosterically inhibited by phosphoenolpyruvate. Its function is as follows. Catalyzes the phosphorylation of D-fructose 6-phosphate to fructose 1,6-bisphosphate by ATP, the first committing step of glycolysis. The chain is ATP-dependent 6-phosphofructokinase 1 from Clostridium perfringens (strain 13 / Type A).